The chain runs to 91 residues: DNA-directed RNA polymerase subunit omega (91 aa).

The disordered stretch occupies residues 66–91 (QMPPPLPNFPGAANREATGAEDAAGE).

The protein belongs to the RNA polymerase subunit omega family. In terms of assembly, the RNAP catalytic core consists of 2 alpha, 1 beta, 1 beta' and 1 omega subunit. When a sigma factor is associated with the core the holoenzyme is formed, which can initiate transcription.

The enzyme catalyses RNA(n) + a ribonucleoside 5'-triphosphate = RNA(n+1) + diphosphate. Promotes RNA polymerase assembly. Latches the N- and C-terminal regions of the beta' subunit thereby facilitating its interaction with the beta and alpha subunits. In Acidithiobacillus ferrooxidans (strain ATCC 23270 / DSM 14882 / CIP 104768 / NCIMB 8455) (Ferrobacillus ferrooxidans (strain ATCC 23270)), this protein is DNA-directed RNA polymerase subunit omega.